The following is a 676-amino-acid chain: DNA ligase (676 aa).

A compositionally biased stretch (basic and acidic residues) spans M1 to G10. Residues M1 to P23 form a disordered region. Residues D52–D56 and S95–L96 contribute to the NAD(+) site. K148 (N6-AMP-lysine intermediate) is an active-site residue. Residues R169, E203, and K330 each contribute to the NAD(+) site. C420, C423, C436, and C441 together coordinate Zn(2+). A BRCT domain is found at E593–G676.

This sequence belongs to the NAD-dependent DNA ligase family. LigA subfamily. Requires Mg(2+) as cofactor. Mn(2+) serves as cofactor.

The catalysed reaction is NAD(+) + (deoxyribonucleotide)n-3'-hydroxyl + 5'-phospho-(deoxyribonucleotide)m = (deoxyribonucleotide)n+m + AMP + beta-nicotinamide D-nucleotide.. DNA ligase that catalyzes the formation of phosphodiester linkages between 5'-phosphoryl and 3'-hydroxyl groups in double-stranded DNA using NAD as a coenzyme and as the energy source for the reaction. It is essential for DNA replication and repair of damaged DNA. The sequence is that of DNA ligase from Sorangium cellulosum (strain So ce56) (Polyangium cellulosum (strain So ce56)).